A 47-amino-acid chain; its full sequence is Large ribosomal subunit protein bL34 (47 aa).

The protein belongs to the bacterial ribosomal protein bL34 family.

The sequence is that of Large ribosomal subunit protein bL34 (rpmH) from Mycolicibacterium smegmatis (strain ATCC 700084 / mc(2)155) (Mycobacterium smegmatis).